We begin with the raw amino-acid sequence, 187 residues long: Mitochondrial intermembrane space import and assembly protein 40 (187 aa).

A mitochondrion-targeting transit peptide spans 1–24; the sequence is MFRPASRALLRAPAVARGPASRRL. Topologically, residues 25–43 are mitochondrial matrix; that stretch reads ISTAPAESKPRSWKNTAVR. The chain crosses the membrane as a helical; Signal-anchor for type II membrane protein span at residues 44-61; sequence LGLAAGAIYYYNTSNVFA. The Mitochondrial intermembrane segment spans residues 62–187; the sequence is ENPSFSLNNQ…MDCIEKFKCV (126 aa). Positions 73–115 are disordered; sequence KKNSAEEPLPTLDSIKPRIREERESAAPKPNAEQAPAQELPFG. A compositionally biased stretch (basic and acidic residues) spans 87 to 98; sequence IKPRIREERESA. 2 disulfides stabilise this stretch: cysteine 146/cysteine 148 and cysteine 167/cysteine 180. A CHCH domain is found at 154 to 187; sequence HGPCGEEFKAAFSCFVYSEEEPKGMDCIEKFKCV. The short motif at 157 to 167 is the Cx9C motif element; sequence CGEEFKAAFSC.

Monomer. Cu(2+) serves as cofactor. The cofactor is Zn(2+).

The protein localises to the mitochondrion inner membrane. In terms of biological role, required for the import and folding of small cysteine-containing proteins (small Tim) in the mitochondrial intermembrane space (IMS). Forms a redox cycle with ERV1 that involves a disulfide relay system. Precursor proteins to be imported into the IMS are translocated in their reduced form into the mitochondria. The oxidized form of MIA40 forms a transient intermolecular disulfide bridge with the reduced precursor protein, resulting in oxidation of the precursor protein that now contains an intramolecular disulfide bond and is able to undergo folding in the IMS. The sequence is that of Mitochondrial intermembrane space import and assembly protein 40 (mia40) from Aspergillus oryzae (strain ATCC 42149 / RIB 40) (Yellow koji mold).